Consider the following 115-residue polypeptide: Nucleoid-associated protein NATL1_00191 (115 aa).

A disordered region spans residues 89–115 (STSTMKERMEDLTGGFKLNLPGMGEES).

Belongs to the YbaB/EbfC family. Homodimer.

The protein localises to the cytoplasm. Its subcellular location is the nucleoid. Functionally, binds to DNA and alters its conformation. May be involved in regulation of gene expression, nucleoid organization and DNA protection. This is Nucleoid-associated protein NATL1_00191 from Prochlorococcus marinus (strain NATL1A).